The following is an 89-amino-acid chain: Putative sodium channel toxin Ts30 (89 aa).

The first 17 residues, 1-17 (MFKLAIILALLFFGARA), serve as a signal peptide directing secretion. One can recognise an LCN-type CS-alpha/beta domain in the interval 21-85 (RDGYPILSDG…FGDSGTPECH (65 aa)). Cystine bridges form between Cys-31/Cys-84, Cys-35/Cys-59, Cys-44/Cys-64, and Cys-48/Cys-66.

In terms of tissue distribution, expressed by the venom gland.

Its subcellular location is the secreted. This is Putative sodium channel toxin Ts30 from Tityus serrulatus (Brazilian scorpion).